A 204-amino-acid chain; its full sequence is Outer-membrane lipoprotein carrier protein (204 aa).

The signal sequence occupies residues 1-21 (MKKYLNLTALLLVGISNVTWA).

The protein belongs to the LolA family. As to quaternary structure, monomer.

The protein localises to the periplasm. Participates in the translocation of lipoproteins from the inner membrane to the outer membrane. Only forms a complex with a lipoprotein if the residue after the N-terminal Cys is not an aspartate (The Asp acts as a targeting signal to indicate that the lipoprotein should stay in the inner membrane). The protein is Outer-membrane lipoprotein carrier protein of Histophilus somni (strain 129Pt) (Haemophilus somnus).